A 211-amino-acid chain; its full sequence is Probable endo-1,4-beta-xylanase 5 (211 aa).

The signal sequence occupies residues 1-16 (MKVTAAFASLLLTAFA). Positions 19-210 (APEPVLVSRS…GAGSASVTIS (192 aa)) constitute a GH11 domain. Glu-106 (nucleophile) is an active-site residue. Glu-197 (proton donor) is an active-site residue.

Belongs to the glycosyl hydrolase 11 (cellulase G) family.

It is found in the secreted. It carries out the reaction Endohydrolysis of (1-&gt;4)-beta-D-xylosidic linkages in xylans.. Its pathway is glycan degradation; xylan degradation. In terms of biological role, endo-1,4-beta-xylanase involved in the hydrolysis of xylan, a major structural heterogeneous polysaccharide found in plant biomass representing the second most abundant polysaccharide in the biosphere, after cellulose. The protein is Probable endo-1,4-beta-xylanase 5 (XYN5) of Aspergillus niger (strain ATCC MYA-4892 / CBS 513.88 / FGSC A1513).